The sequence spans 352 residues: Dysbindin (352 aa).

Phosphoserine is present on S11. A coiled-coil region spans residues 92 to 180 (TSLAELQEQL…AELDTEHAQK (89 aa)). Residues 243-256 (LMDLSDQEALDVFL) carry the Nuclear export signal motif. A disordered region spans residues 267–352 (SPGLEMESNP…SDQCDSTQDI (86 aa)). Polar residues predominate over residues 274 to 285 (SNPSQNEMNLQI). The segment covering 286-301 (PNPSESASQPPASPSA) has biased composition (low complexity). 2 positions are modified to phosphoserine: S340 and S343.

The protein belongs to the dysbindin family. In terms of assembly, interacts (via its coiled coil domain) with KXD1. Interacts with AP3B2, TRIM32, CMYA5, PI4K2 and RNF151. Interacts with the DNA-dependent protein kinase complex DNA-PK; the interaction phosphorylates DTNBP1 in vitro. Interacts directly in this complex with XRCC5 and XRCC6. Interacts with XPO1; the interaction exports DTNBP1 out of the nucleus. Component of the biogenesis of lysosome-related organelles complex 1 (BLOC-1) composed of at least BLOC1S1, BLOC1S2, BLOC1S3, BLOC1S4, BLOC1S5, BLOC1S6, DTNBP1/BLOC1S7 and SNAPIN/BLOC1S8. Interacts directly in the complex with BLOC1S5, BLOC1S6 and SNAPIN/BLOC1S8. The BLOC-1 complex associates with the AP-3 protein complex and membrane protein cargos. This BLOC-1 complex also associates with the BLOC-2 complex in endosomes. Binds to DTNA and DTNB but may not be a physiological binding partner. Interacts with AP3M1. Ubiquitinated by TRIM32. Ubiquitination leads to DTNBP1 degradation. Detected in hippocampus neurons (at protein level). Ubiquitously expressed. The highest expression is observed in testis, liver, kidney, brain, heart and lung. In the brain, found primarily in axon bundles and axon terminals, notably in the cerebellum and hippocampus. Expressed at lower levels in stomach, small intestine and skeletal muscle, where it is detected at the sarcolemma.

Its subcellular location is the cytoplasm. It localises to the cytoplasmic vesicle membrane. The protein resides in the cytoplasmic vesicle. It is found in the secretory vesicle. The protein localises to the synaptic vesicle membrane. Its subcellular location is the endosome membrane. It localises to the melanosome membrane. The protein resides in the nucleus. It is found in the postsynaptic density. The protein localises to the presynaptic cell membrane. Its subcellular location is the endoplasmic reticulum. Functionally, component of the BLOC-1 complex, a complex that is required for normal biogenesis of lysosome-related organelles (LRO), such as platelet dense granules and melanosomes. In concert with the AP-3 complex, the BLOC-1 complex is required to target membrane protein cargos into vesicles assembled at cell bodies for delivery into neurites and nerve terminals. The BLOC-1 complex, in association with SNARE proteins, is also proposed to be involved in neurite extension. Associates with the BLOC-2 complex to facilitate the transport of TYRP1 independent of AP-3 function. Plays a role in synaptic vesicle trafficking and in neurotransmitter release. Plays a role in the regulation of cell surface exposure of DRD2. May play a role in actin cytoskeleton reorganization and neurite outgrowth. May modulate MAPK8 phosphorylation. Appears to promote neuronal transmission and viability through regulating the expression of SNAP25 and SYN1, modulating PI3-kinase-Akt signaling and influencing glutamatergic release. Regulates the expression of SYN1 through binding to its promoter. Modulates prefrontal cortical activity via the dopamine/D2 pathway. The chain is Dysbindin (Dtnbp1) from Rattus norvegicus (Rat).